A 253-amino-acid polypeptide reads, in one-letter code: Glutamate racemase (253 aa).

Substrate is bound by residues 7–8 (DS) and 39–40 (YG). Cysteine 70 (proton donor/acceptor) is an active-site residue. 71–72 (NS) is a binding site for substrate. The active-site Proton donor/acceptor is the cysteine 179. 180-181 (TH) serves as a coordination point for substrate.

This sequence belongs to the aspartate/glutamate racemases family.

The catalysed reaction is L-glutamate = D-glutamate. It functions in the pathway cell wall biogenesis; peptidoglycan biosynthesis. Provides the (R)-glutamate required for cell wall biosynthesis. The polypeptide is Glutamate racemase (Nitratiruptor sp. (strain SB155-2)).